A 346-amino-acid polypeptide reads, in one-letter code: Oxidoreductase calI (346 aa).

The segment at 11 to 33 (VSTPQGRGDGRPTADQVLRDQDP) is disordered. A compositionally biased stretch (basic and acidic residues) spans 18–32 (GDGRPTADQVLRDQD). NADP(+) contacts are provided by L52, K76, D100, and N128. S181 acts as the Proton donor in catalysis. Residues Y208, K212, and I241 each contribute to the NADP(+) site. Y208 functions as the Proton acceptor in the catalytic mechanism. K212 serves as the catalytic Lowers pKa of active site Tyr.

Belongs to the short-chain dehydrogenases/reductases (SDR) family.

It participates in secondary metabolite biosynthesis. Functionally, oxidoreductase; part of the gene cluster that mediates the biosynthesis of calbistrin A and related compounds. Calbistrin A is a secondary metabolite with an interesting structure that was recently found to have bioactivity against leukemia cells. It consists of two polyketides linked by an ester bond: a bicyclic decalin containing polyketide and a linear 12 carbon dioic acid structure. The polyketide synthase calA is probably responsible for forming the decalin moiety. Because calA lacks a designated enoylreductase (ER) domain, the required activity is provided by the trans-enoyl reductase calK. Following release from the PKS, calF then probably catalyzes the oxidation and the subsequent Diels Alder cycloisomerization that lead to the formation of the decalin moiety. The decalin polyketide backbone includes two C-methyl groups, at C7 and C11 in backbone, of which the C7 position is probably methylated by the methyltransferase domain of calA. A candidate for adding the methyl group at C11, if not done by CalA, is the cluster methyltransferase calH. Several additional tailoring enzymes within the cluster could be involved in the modification of the decalin polyketide product. Those include the 3 cytochrome P450 monooxygenases CalE, CalG and CalL, of which one might be responsible for the introduction of the extra hydroxyl group attached to the backbone of the decalin moiety, at position C9 in the backbone, that allows for attachment of the linear moiety. One tailoring enzyme activity that is expected to be involved in biosynthesis of calbistrin is an acyltransferase for connecting the two polyketide synthase products, and which could be performed by the cluster acyltransferase calJ. The enzyme responsible for the biosynthesis of the linear moiety, probably a second PKS, has not been identified yet. The polypeptide is Oxidoreductase calI (Penicillium decumbens).